The sequence spans 908 residues: DNA mismatch repair protein MutS (908 aa).

629 to 636 (GPNMAGKS) contributes to the ATP binding site. The disordered stretch occupies residues 822–863 (ADEADGAPSEDPPSEDPPSGDGVRAKKGEADAVPDLEDSQAN).

Belongs to the DNA mismatch repair MutS family.

Functionally, this protein is involved in the repair of mismatches in DNA. It is possible that it carries out the mismatch recognition step. This protein has a weak ATPase activity. This is DNA mismatch repair protein MutS from Salinibacter ruber (strain DSM 13855 / M31).